The following is a 108-amino-acid chain: Translation initiation factor 1A (108 aa).

One can recognise an S1-like domain in the interval 11-85 (PSKDVPKPEE…TKADIVYRYM (75 aa)).

This sequence belongs to the eIF-1A family.

In terms of biological role, seems to be required for maximal rate of protein biosynthesis. Enhances ribosome dissociation into subunits and stabilizes the binding of the initiator Met-tRNA(I) to 40 S ribosomal subunits. The sequence is that of Translation initiation factor 1A (eIF1A) from Metallosphaera sedula (strain ATCC 51363 / DSM 5348 / JCM 9185 / NBRC 15509 / TH2).